A 160-amino-acid chain; its full sequence is Large ribosomal subunit protein uL10 (160 aa).

This sequence belongs to the universal ribosomal protein uL10 family. Part of the ribosomal stalk of the 50S ribosomal subunit. The N-terminus interacts with L11 and the large rRNA to form the base of the stalk. The C-terminus forms an elongated spine to which L12 dimers bind in a sequential fashion forming a multimeric L10(L12)X complex.

Its function is as follows. Forms part of the ribosomal stalk, playing a central role in the interaction of the ribosome with GTP-bound translation factors. The chain is Large ribosomal subunit protein uL10 from Ehrlichia canis (strain Jake).